The sequence spans 212 residues: Redox-sensing transcriptional repressor Rex (212 aa).

Positions L17–F56 form a DNA-binding region, H-T-H motif. G91–G96 lines the NAD(+) pocket.

It belongs to the transcriptional regulatory Rex family. As to quaternary structure, homodimer.

Its subcellular location is the cytoplasm. In terms of biological role, modulates transcription in response to changes in cellular NADH/NAD(+) redox state. This is Redox-sensing transcriptional repressor Rex from Chloroflexus aurantiacus (strain ATCC 29366 / DSM 635 / J-10-fl).